Consider the following 508-residue polypeptide: Glycerol kinase (508 aa).

T14 lines the ADP pocket. The ATP site is built by T14, T15, and S16. Residue T14 coordinates sn-glycerol 3-phosphate. R18 serves as a coordination point for ADP. Residues R84, E85, Y136, and D245 each contribute to the sn-glycerol 3-phosphate site. 5 residues coordinate glycerol: R84, E85, Y136, D245, and Q246. ADP-binding residues include T267 and G314. Residues T267, G314, Q318, and G415 each coordinate ATP. Positions 415 and 419 each coordinate ADP.

Belongs to the FGGY kinase family.

It carries out the reaction glycerol + ATP = sn-glycerol 3-phosphate + ADP + H(+). Its pathway is polyol metabolism; glycerol degradation via glycerol kinase pathway; sn-glycerol 3-phosphate from glycerol: step 1/1. With respect to regulation, inhibited by fructose 1,6-bisphosphate (FBP). In terms of biological role, key enzyme in the regulation of glycerol uptake and metabolism. Catalyzes the phosphorylation of glycerol to yield sn-glycerol 3-phosphate. The protein is Glycerol kinase of Bordetella parapertussis (strain 12822 / ATCC BAA-587 / NCTC 13253).